A 103-amino-acid chain; its full sequence is MKIVVMGDSDTVVGFRLAGVHEAYEYDESLESVERARNKLRELLERDDVGIILITERLAQRIGSLPEVKFPIILQIPDKFGSIYGEDILRDVVRRAIGVELKR.

The protein belongs to the V-ATPase F subunit family. Has multiple subunits with at least A(3), B(3), C, D, E, F, H, I and proteolipid K(x).

It localises to the cell membrane. In terms of biological role, component of the A-type ATP synthase that produces ATP from ADP in the presence of a proton gradient across the membrane. The chain is A-type ATP synthase subunit F from Pyrococcus furiosus (strain ATCC 43587 / DSM 3638 / JCM 8422 / Vc1).